We begin with the raw amino-acid sequence, 264 residues long: NAD-capped RNA hydrolase NudC (264 aa).

Zn(2+) is bound by residues C99 and C102. Residue E112 participates in substrate binding. Residues C117 and C120 each contribute to the Zn(2+) site. Y125 provides a ligand contact to substrate. In terms of domain architecture, Nudix hydrolase spans 126–253 (PVICPSIIVA…TIARKLIHAT (128 aa)). A162, E178, and E182 together coordinate a divalent metal cation. Positions 163–184 (GFVEVGETFEQAVQREVFEETG) match the Nudix box motif. Position 196–203 (196–203 (QPWAFPNS)) interacts with substrate. Residue E223 participates in a divalent metal cation binding. A246 provides a ligand contact to substrate.

Belongs to the Nudix hydrolase family. NudC subfamily. As to quaternary structure, homodimer. Mg(2+) serves as cofactor. The cofactor is Mn(2+). Zn(2+) is required as a cofactor.

The catalysed reaction is a 5'-end NAD(+)-phospho-ribonucleoside in mRNA + H2O = a 5'-end phospho-adenosine-phospho-ribonucleoside in mRNA + beta-nicotinamide D-ribonucleotide + 2 H(+). It catalyses the reaction NAD(+) + H2O = beta-nicotinamide D-ribonucleotide + AMP + 2 H(+). It carries out the reaction NADH + H2O = reduced beta-nicotinamide D-ribonucleotide + AMP + 2 H(+). In terms of biological role, mRNA decapping enzyme that specifically removes the nicotinamide adenine dinucleotide (NAD) cap from a subset of mRNAs by hydrolyzing the diphosphate linkage to produce nicotinamide mononucleotide (NMN) and 5' monophosphate mRNA. The NAD-cap is present at the 5'-end of some mRNAs and stabilizes RNA against 5'-processing. Has preference for mRNAs with a 5'-end purine. Catalyzes the hydrolysis of a broad range of dinucleotide pyrophosphates. In Haemophilus influenzae (strain PittGG), this protein is NAD-capped RNA hydrolase NudC.